A 38-amino-acid chain; its full sequence is Large ribosomal subunit protein bL36 (38 aa).

Belongs to the bacterial ribosomal protein bL36 family.

The sequence is that of Large ribosomal subunit protein bL36 from Sorangium cellulosum (strain So ce56) (Polyangium cellulosum (strain So ce56)).